Consider the following 611-residue polypeptide: Phosphomethylpyrimidine synthase (611 aa).

Substrate is bound by residues N212, M241, Y270, H306, 326-328 (SRG), 367-370 (DGLR), and E406. H410 is a binding site for Zn(2+). Y433 is a substrate binding site. H474 lines the Zn(2+) pocket. Residues C554, C557, and C562 each contribute to the [4Fe-4S] cluster site.

It belongs to the ThiC family. Homodimer. [4Fe-4S] cluster is required as a cofactor.

The enzyme catalyses 5-amino-1-(5-phospho-beta-D-ribosyl)imidazole + S-adenosyl-L-methionine = 4-amino-2-methyl-5-(phosphooxymethyl)pyrimidine + CO + 5'-deoxyadenosine + formate + L-methionine + 3 H(+). The protein operates within cofactor biosynthesis; thiamine diphosphate biosynthesis. Functionally, catalyzes the synthesis of the hydroxymethylpyrimidine phosphate (HMP-P) moiety of thiamine from aminoimidazole ribotide (AIR) in a radical S-adenosyl-L-methionine (SAM)-dependent reaction. In Bartonella bacilliformis (strain ATCC 35685 / KC583 / Herrer 020/F12,63), this protein is Phosphomethylpyrimidine synthase.